Consider the following 502-residue polypeptide: tRNA-2-methylthio-N(6)-dimethylallyladenosine synthase (502 aa).

The 118-residue stretch at 12–129 folds into the MTTase N-terminal domain; it reads RTYQVRTYGC…LPVLLERARH (118 aa). Residues cysteine 21, cysteine 58, cysteine 92, cysteine 166, cysteine 170, and cysteine 173 each coordinate [4Fe-4S] cluster. The 232-residue stretch at 152–383 folds into the Radical SAM core domain; it reads RESTYAGWVS…ACVEEITWAE (232 aa). A TRAM domain is found at 385–455; sequence RRLVGETVEV…PHHLNADGEP (71 aa). A disordered region spans residues 451-502; the sequence is ADGEPLAHRRTPAGDAAEAGRRPRTAGVSLGLPTVGAPPSPVPPAASSACAC.

The protein belongs to the methylthiotransferase family. MiaB subfamily. Monomer. It depends on [4Fe-4S] cluster as a cofactor.

The protein resides in the cytoplasm. It catalyses the reaction N(6)-dimethylallyladenosine(37) in tRNA + (sulfur carrier)-SH + AH2 + 2 S-adenosyl-L-methionine = 2-methylsulfanyl-N(6)-dimethylallyladenosine(37) in tRNA + (sulfur carrier)-H + 5'-deoxyadenosine + L-methionine + A + S-adenosyl-L-homocysteine + 2 H(+). Catalyzes the methylthiolation of N6-(dimethylallyl)adenosine (i(6)A), leading to the formation of 2-methylthio-N6-(dimethylallyl)adenosine (ms(2)i(6)A) at position 37 in tRNAs that read codons beginning with uridine. The polypeptide is tRNA-2-methylthio-N(6)-dimethylallyladenosine synthase (Salinispora arenicola (strain CNS-205)).